The following is a 242-amino-acid chain: Probable septum site-determining protein MinC (242 aa).

Belongs to the MinC family. Interacts with MinD and FtsZ.

Its function is as follows. Cell division inhibitor that blocks the formation of polar Z ring septums. Rapidly oscillates between the poles of the cell to destabilize FtsZ filaments that have formed before they mature into polar Z rings. Prevents FtsZ polymerization. This is Probable septum site-determining protein MinC from Brucella anthropi (strain ATCC 49188 / DSM 6882 / CCUG 24695 / JCM 21032 / LMG 3331 / NBRC 15819 / NCTC 12168 / Alc 37) (Ochrobactrum anthropi).